A 117-amino-acid polypeptide reads, in one-letter code: MIIDSSRIPSFTQLHSTMTRAPLLLLCVALVLLGHVNGATVRNEDKWKPLNNPRNRDLFFRRLQAYFKGRGLDLGTFPNPFPTNENPRPLSFQSELTASASADYEEQKNSFHNYLKG.

The signal sequence occupies residues 1-38; it reads MIIDSSRIPSFTQLHSTMTRAPLLLLCVALVLLGHVNG.

It is found in the secreted. This is an uncharacterized protein from Homo sapiens (Human).